Here is a 718-residue protein sequence, read N- to C-terminus: Calpastatin (718 aa).

2 disordered regions span residues 1–189 (MNPA…MSST) and 210–238 (EKKT…LSSD). Positions 20 to 29 (PHSKKRHRRQ) are enriched in basic residues. Composition is skewed to basic and acidic residues over residues 30-61 (DAKT…EHTK) and 68-104 (HASD…KPQD). K32 is covalently cross-linked (Glycyl lysine isopeptide (Lys-Gly) (interchain with G-Cter in SUMO2)). K49 bears the N6-acetyllysine mark. Residue S86 is modified to Phosphoserine. Residues 114–124 (AAGTTAAPGKA) are compositionally biased toward low complexity. Phosphoserine occurs at positions 133, 222, and 243. Residues 170–222 (TQEDSTAYTGPEISDPMSSTYIEELGKREVTIPPKYRELLEKKTGVAGPPPDS) form an Inhibitory domain 1 repeat. Disordered stretches follow at residues 266–291 (ESAK…AMSD) and 320–509 (EAKR…QLPA). Residue S290 is modified to Blocked amino end (Ser); in form erythrocyte. Residues 307–359 (EPELDLSSIKEVAEAKRKEEKVEKCGEDDETVPAEYRLKPATDKDGKPLLPEP) form an Inhibitory domain 2 repeat. 3 stretches are compositionally biased toward basic and acidic residues: residues 320-331 (EAKRKEEKVEKC), 342-377 (YRLK…ELSK), and 384-399 (SNEK…EESK). Residues S367, S369, and S376 each carry the phosphoserine modification. Low complexity predominate over residues 400–411 (AAVPAPVAEAVP). S444 carries the phosphoserine modification. A compositionally biased stretch (basic and acidic residues) spans 446–496 (GRKEADPEEGKPVADKIKEKSKEEEREKLGEKEETIPPDYRLEEAKDKDGK). Residues 450–503 (ADPEEGKPVADKIKEKSKEEEREKLGEKEETIPPDYRLEEAKDKDGKPLLPSEP) form an Inhibitory domain 3 repeat. S520, S531, S579, and S581 each carry phosphoserine. The disordered stretch occupies residues 543–718 (VSEVVSQSPA…KPKANEKNAS (176 aa)). Over residues 566–579 (PSNKELDDALDKLS) the composition is skewed to basic and acidic residues. An Inhibitory domain 4 repeat occupies 587-640 (PDPDENKPMEDKVKERAKKEHKDKLGERDDTIPPEYRHLLDQGEQDKPEKPPTK). Composition is skewed to basic and acidic residues over residues 587-650 (PDPD…KPAG) and 706-718 (ETSK…KNAS).

Belongs to the protease inhibitor I27 (calpastatin) family.

Functionally, specific inhibition of calpain (calcium-dependent cysteine protease). Plays a key role in postmortem tenderization of meat and have been proposed to be involved in muscle protein degradation in living tissue. The chain is Calpastatin (CAST) from Oryctolagus cuniculus (Rabbit).